The chain runs to 461 residues: 3-deoxy-D-manno-octulosonic acid transferase (461 aa).

The helical; Signal-anchor transmembrane segment at 2–22 threads the bilayer; sequence MLLYYTLSFILLPVYFIIIFI. The RPE1 insert domain maps to 47 to 88; that stretch reads SALDFIQMSVNKEGFTDHKTTSYVDMHRNASLMYKLSLERSY. The active-site Proton acceptor is E102. CMP-binding positions include 306–307, 347–349, and 372–375; these read PR, FGE, and NILE.

This sequence belongs to the glycosyltransferase group 1 family. Glycosyltransferase 30 subfamily.

It is found in the cell inner membrane. The enzyme catalyses lipid IVA (E. coli) + CMP-3-deoxy-beta-D-manno-octulosonate = alpha-Kdo-(2-&gt;6)-lipid IVA (E. coli) + CMP + H(+). Its pathway is bacterial outer membrane biogenesis; LPS core biosynthesis. Functionally, involved in lipopolysaccharide (LPS) biosynthesis. Catalyzes the transfer of 3-deoxy-D-manno-octulosonate (Kdo) residue(s) from CMP-Kdo to lipid IV(A), the tetraacyldisaccharide-1,4'-bisphosphate precursor of lipid A. The sequence is that of 3-deoxy-D-manno-octulosonic acid transferase (waaA) from Rickettsia prowazekii (strain Madrid E).